A 75-amino-acid chain; its full sequence is Small ribosomal subunit protein bS16 (75 aa).

This sequence belongs to the bacterial ribosomal protein bS16 family.

This chain is Small ribosomal subunit protein bS16, found in Campylobacter jejuni subsp. jejuni serotype O:23/36 (strain 81-176).